A 223-amino-acid polypeptide reads, in one-letter code: Deoxyribose-phosphate aldolase (223 aa).

Catalysis depends on Asp91, which acts as the Proton donor/acceptor. The active-site Schiff-base intermediate with acetaldehyde is Lys153. Lys182 (proton donor/acceptor) is an active-site residue.

The protein belongs to the DeoC/FbaB aldolase family. DeoC type 1 subfamily.

The protein localises to the cytoplasm. The catalysed reaction is 2-deoxy-D-ribose 5-phosphate = D-glyceraldehyde 3-phosphate + acetaldehyde. Its pathway is carbohydrate degradation; 2-deoxy-D-ribose 1-phosphate degradation; D-glyceraldehyde 3-phosphate and acetaldehyde from 2-deoxy-alpha-D-ribose 1-phosphate: step 2/2. Functionally, catalyzes a reversible aldol reaction between acetaldehyde and D-glyceraldehyde 3-phosphate to generate 2-deoxy-D-ribose 5-phosphate. This is Deoxyribose-phosphate aldolase from Yersinia pseudotuberculosis serotype O:1b (strain IP 31758).